Reading from the N-terminus, the 697-residue chain is Putative ATP-dependent RNA helicase an3 (697 aa).

Residues 27–189 (ESGVAGTKGR…PLAPNDRVEQ (163 aa)) form a disordered region. Basic and acidic residues-rich tracts occupy residues 89 to 111 (GRSD…DKDA), 135 to 144 (RRTDDRRQDG), and 151 to 170 (RSDK…WSDD). Positions 221–249 (ESFHDVTMGEIIMGNIQLTRYTRPTPVQK) match the Q motif motif. ATP is bound by residues 241–248 (YTRPTPVQ) and 265–272 (AQTGSGKT). Residues 252–444 (IPIIIEKRDL…RDFLDEYIFL (193 aa)) form the Helicase ATP-binding domain. The DEAD box signature appears at 388 to 391 (DEAD). In terms of domain architecture, Helicase C-terminal spans 455-616 (NITQKVVWVE…EVPSWLENMA (162 aa)). Residues 619–666 (QHHKSSSRGRSKSRFSGGFGAKDYRQSSGAGSSFGSSRGGRSSGHGGS) form a disordered region. Residues 622 to 631 (KSSSRGRSKS) are compositionally biased toward basic residues. The span at 645 to 654 (SSGAGSSFGS) shows a compositional bias: low complexity. The segment covering 655 to 666 (SRGGRSSGHGGS) has biased composition (gly residues).

Belongs to the DEAD box helicase family. DDX3/DED1 subfamily.

It is found in the cell membrane. Its subcellular location is the nucleus. The protein localises to the cytoplasm. It localises to the stress granule. The protein resides in the inflammasome. It is found in the cell projection. Its subcellular location is the lamellipodium. It catalyses the reaction ATP + H2O = ADP + phosphate + H(+). Multifunctional ATP-dependent RNA helicase. The ATPase activity can be stimulated by various ribo-and deoxynucleic acids indicative for a relaxed substrate specificity. In vitro can unwind partially double-stranded DNA with a preference for 5'-single-stranded DNA overhangs. Involved in many cellular processes, which do not necessarily require its ATPase/helicase catalytic activities. Involved in the regulation of transcription and translation initiation. Involved in innate immunity. Involved in both stress and inflammatory responses. May negatively regulate extrinsic apoptotic signaling pathway via death domain receptors. May be involved in mitotic chromosome segregation. Required for canonical Wnt signaling involved in anteroposterior neural patterning. In Xenopus laevis (African clawed frog), this protein is Putative ATP-dependent RNA helicase an3 (an3).